The sequence spans 200 residues: Holliday junction branch migration complex subunit RuvA (200 aa).

Residues 1–64 (MFAYFRGKLT…EDLLQLYGFS (64 aa)) are domain I. A domain II region spans residues 65–143 (GEEERQLFRL…KLSPVSALAS (79 aa)). Residues 144-154 (PARLSSTLLRD) are flexible linker. Positions 154-200 (DDAVNALVTLGFSRIIVQKAVVAILEQNPGLTVEEVIKAALVSIHNS) are domain III.

Belongs to the RuvA family. In terms of assembly, homotetramer. Forms an RuvA(8)-RuvB(12)-Holliday junction (HJ) complex. HJ DNA is sandwiched between 2 RuvA tetramers; dsDNA enters through RuvA and exits via RuvB. An RuvB hexamer assembles on each DNA strand where it exits the tetramer. Each RuvB hexamer is contacted by two RuvA subunits (via domain III) on 2 adjacent RuvB subunits; this complex drives branch migration. In the full resolvosome a probable DNA-RuvA(4)-RuvB(12)-RuvC(2) complex forms which resolves the HJ.

It localises to the cytoplasm. The RuvA-RuvB-RuvC complex processes Holliday junction (HJ) DNA during genetic recombination and DNA repair, while the RuvA-RuvB complex plays an important role in the rescue of blocked DNA replication forks via replication fork reversal (RFR). RuvA specifically binds to HJ cruciform DNA, conferring on it an open structure. The RuvB hexamer acts as an ATP-dependent pump, pulling dsDNA into and through the RuvAB complex. HJ branch migration allows RuvC to scan DNA until it finds its consensus sequence, where it cleaves and resolves the cruciform DNA. The polypeptide is Holliday junction branch migration complex subunit RuvA (Pelodictyon phaeoclathratiforme (strain DSM 5477 / BU-1)).